The following is a 453-amino-acid chain: Retroviral integration site protein Fli-1 homolog (453 aa).

One can recognise a PNT domain in the interval 111-197; sequence PPPPNMTTNE…SHLNYLRDSS (87 aa). The span at 201-214 shows a compositional bias: polar residues; it reads GYNTQAHTDQSSRL. The segment at 201 to 273 is disordered; the sequence is GYNTQAHTDQ…YQILGPTSSR (73 aa). A compositionally biased stretch (basic and acidic residues) spans 215-226; that stretch reads TAKEDPSYEAVR. Polar residues-rich tracts occupy residues 230-239 and 246-273; these read WGNSMSSPVT and GTQN…TSSR. A DNA-binding region (ETS) is located at residues 282–362; it reads IQLWQFLLEL…HGKRYAYKFD (81 aa).

It belongs to the ETS family.

The protein resides in the nucleus. The protein is Retroviral integration site protein Fli-1 homolog (fli1) of Xenopus laevis (African clawed frog).